Here is a 447-residue protein sequence, read N- to C-terminus: UPF0210 protein lp_2507 (447 aa).

Belongs to the UPF0210 family. Homodimer.

This chain is UPF0210 protein lp_2507, found in Lactiplantibacillus plantarum (strain ATCC BAA-793 / NCIMB 8826 / WCFS1) (Lactobacillus plantarum).